The chain runs to 598 residues: Arginine--tRNA ligase (598 aa).

A 'HIGH' region motif is present at residues 131 to 141; it reads ANPTGPMHVGH. The disordered stretch occupies residues 288 to 309; the sequence is KLPPPKSKKGQPPPQPQPDEEG.

Belongs to the class-I aminoacyl-tRNA synthetase family. As to quaternary structure, monomer.

It localises to the cytoplasm. The catalysed reaction is tRNA(Arg) + L-arginine + ATP = L-arginyl-tRNA(Arg) + AMP + diphosphate. The sequence is that of Arginine--tRNA ligase from Anaeromyxobacter dehalogenans (strain 2CP-1 / ATCC BAA-258).